A 217-amino-acid polypeptide reads, in one-letter code: Insulin-like growth factor 2.L (217 aa).

Residues 1–56 form the signal peptide; it reads MEQLSCKHRSSSMEAEAQLCRQTESRSTQLPRMSVMRHLFLLSITFLVYTLDSAKA. The interval 57 to 83 is b; that stretch reads YRPTETLCGGELVDTLQFVCGDRGFYF. 3 disulfides stabilise this stretch: Cys64–Cys103, Cys76–Cys116, and Cys102–Cys107. The segment at 84 to 96 is c; sequence STNNGRSNRRSNR. An a region spans residues 97–117; that stretch reads GIVEECCFRSCDLELLETYCA. Positions 118 to 123 are d; sequence KPSKNE. A propeptide spans 124-217 (e peptide); it reads RDVSTAPATA…LQQTSEPSHN (94 aa).

Belongs to the insulin family.

The protein localises to the secreted. Functionally, the insulin-like growth factors, isolated from plasma, are structurally and functionally related to insulin but have a much higher growth-promoting activity. Promotes anterior neural development. Acts as a ligand for integrin which is required for IGF2 signaling. The sequence is that of Insulin-like growth factor 2.L from Xenopus laevis (African clawed frog).